Here is a 258-residue protein sequence, read N- to C-terminus: L-rhamnose-1-dehydrogenase (258 aa).

Residues isoleucine 19, aspartate 68, and asparagine 95 each coordinate NADP(+). Catalysis depends on proton donor residues serine 147 and tyrosine 161. Positions 161, 165, 194, and 196 each coordinate NADP(+). The active-site Lowers pKa of active site Tyr is the lysine 165.

It belongs to the short-chain dehydrogenases/reductases (SDR) family.

The enzyme catalyses L-rhamnofuranose + NAD(+) = L-rhamnono-1,4-lactone + NADH + H(+). NAD-dependent dehydrogenase that has high activity with L-rhamnose and L-lyxose, and shows only low activity with L-mannose. Has no activity with NADP. Catalyzes the first step in an alternative pathway for rhamnose utilization that does not involve phosphorylated intermediates. The sequence is that of L-rhamnose-1-dehydrogenase (DHG2) from Scheffersomyces stipitis (strain ATCC 58785 / CBS 6054 / NBRC 10063 / NRRL Y-11545) (Yeast).